Consider the following 101-residue polypeptide: Apolipoprotein C-II (101 aa).

The first 22 residues, 1-22 (MGTRFLLALFLVLLVLGLEVQA), serve as a signal peptide directing secretion. Positions 66-74 (AVDERIRDM) are lipid binding. The segment at 78-101 (STAAVTTYAGIFTDQLFSMLKGEQ) is lipoprotein lipase cofactor.

The protein belongs to the apolipoprotein C2 family. Proapolipoprotein C-II is synthesized as a sialic acid containing glycoprotein which is subsequently desialylated prior to its proteolytic processing. Post-translationally, proapolipoprotein C-II, the major form found in plasma undergoes proteolytic cleavage of its N-terminal hexapeptide to generate apolipoprotein C-II, which occurs as the minor form in plasma.

The protein localises to the secreted. In terms of biological role, component of chylomicrons, very low-density lipoproteins (VLDL), low-density lipoproteins (LDL), and high-density lipoproteins (HDL) in plasma. Plays an important role in lipoprotein metabolism as an activator of lipoprotein lipase. Both proapolipoprotein C-II and apolipoprotein C-II can activate lipoprotein lipase. This Tupaia glis (Common tree shrew) protein is Apolipoprotein C-II (APOC2).